A 511-amino-acid chain; its full sequence is Maturase K (511 aa).

The protein belongs to the intron maturase 2 family. MatK subfamily.

The protein localises to the plastid. It localises to the chloroplast. In terms of biological role, usually encoded in the trnK tRNA gene intron. Probably assists in splicing its own and other chloroplast group II introns. In Chloranthus spicatus (Chulantree), this protein is Maturase K.